The sequence spans 113 residues: Fruiting body-specific class I hydrophobin fbh1 (113 aa).

Residues 1-23 (MFSIRIATVVLAASAALRPPARI) form the signal peptide. Disulfide bonds link Cys-33–Cys-92, Cys-40–Cys-86, Cys-41–Cys-73, and Cys-93–Cys-106.

The protein belongs to the fungal hydrophobin family. As to quaternary structure, self-assembles to form functional amyloid fibrils called rodlets. Self-assembly into fibrillar rodlets occurs spontaneously at hydrophobic:hydrophilic interfaces and the rodlets further associate laterally to form amphipathic monolayers.

The protein resides in the secreted. The protein localises to the cell wall. Functionally, aerial growth, conidiation, and dispersal of filamentous fungi in the environment rely upon a capability of their secreting small amphipathic proteins called hydrophobins (HPBs) with low sequence identity. Class I can self-assemble into an outermost layer of rodlet bundles on aerial cell surfaces, conferring cellular hydrophobicity that supports fungal growth, development and dispersal; whereas Class II form highly ordered films at water-air interfaces through intermolecular interactions but contribute nothing to the rodlet structure. Fbh1 is a fruiting body-specific class I hydrophobin that is involved in the growth rate and primordia formation. In Pleurotus ostreatus (Oyster mushroom), this protein is Fruiting body-specific class I hydrophobin fbh1.